The chain runs to 54 residues: Large ribosomal subunit protein bL33 (54 aa).

Belongs to the bacterial ribosomal protein bL33 family.

This chain is Large ribosomal subunit protein bL33, found in Buchnera aphidicola subsp. Cinara cedri (strain Cc).